The chain runs to 320 residues: Delta-aminolevulinic acid dehydratase (320 aa).

C119, C121, and C129 together coordinate Zn(2+). K194 acts as the Schiff-base intermediate with substrate in catalysis. Residues R204 and R216 each coordinate 5-aminolevulinate. E232 contacts Mg(2+). Residue K247 is the Schiff-base intermediate with substrate of the active site. S273 serves as a coordination point for 5-aminolevulinate.

It belongs to the ALAD family. As to quaternary structure, homooctamer. Zn(2+) is required as a cofactor.

The catalysed reaction is 2 5-aminolevulinate = porphobilinogen + 2 H2O + H(+). The protein operates within porphyrin-containing compound metabolism; protoporphyrin-IX biosynthesis; coproporphyrinogen-III from 5-aminolevulinate: step 1/4. In terms of biological role, catalyzes an early step in the biosynthesis of tetrapyrroles. Binds two molecules of 5-aminolevulinate per subunit, each at a distinct site, and catalyzes their condensation to form porphobilinogen. This chain is Delta-aminolevulinic acid dehydratase (hemB), found in Methanothermus sociabilis.